The following is a 202-amino-acid chain: Small ribosomal subunit protein uS4 (202 aa).

The S4 RNA-binding domain occupies 94–157; it reads SRLDSLVYRA…LEIPLIKNTL (64 aa).

The protein belongs to the universal ribosomal protein uS4 family. As to quaternary structure, part of the 30S ribosomal subunit. Contacts protein S5. The interaction surface between S4 and S5 is involved in control of translational fidelity.

One of the primary rRNA binding proteins, it binds directly to 16S rRNA where it nucleates assembly of the body of the 30S subunit. Its function is as follows. With S5 and S12 plays an important role in translational accuracy. In Ureaplasma parvum serovar 3 (strain ATCC 27815 / 27 / NCTC 11736), this protein is Small ribosomal subunit protein uS4.